A 35-amino-acid polypeptide reads, in one-letter code: Flavodoxin (35 aa).

One can recognise a Flavodoxin-like domain in the interval 4–35 (IGLFYGTZTGKTESVAEIIDEFGDEVVTLDID).

It belongs to the flavodoxin family. Requires FMN as cofactor.

Functionally, low-potential electron donor to a number of redox enzymes. The polypeptide is Flavodoxin (Nostoc sp. (strain MAC)).